The primary structure comprises 304 residues: Protein PagO (304 aa).

10 helical membrane passes run 4-24, 34-54, 67-87, 95-115, 119-139, 150-170, 180-200, 214-234, 246-266, and 267-287; these read VSIS…WLAM, VFAT…IAWL, LFQF…MIYG, LAAI…VLFL, AKLM…GILL, WQGI…YTQC, ITFN…TGWF, ILAT…CYFA, LVFL…YGYA, and ISTH…LTLV. 2 consecutive EamA domains span residues 15–139 and 161–287; these read LTWG…GILL and LIHA…LTLV.

This sequence belongs to the EamA transporter family.

It is found in the cell membrane. The sequence is that of Protein PagO (pagO) from Salmonella typhimurium (strain LT2 / SGSC1412 / ATCC 700720).